Reading from the N-terminus, the 69-residue chain is Pleurain-A2 (69 aa).

The signal sequence occupies residues Met-1–Cys-22. The propeptide occupies Lys-23–Arg-43. The cysteines at positions 63 and 69 are disulfide-linked.

Expressed by the skin glands.

It localises to the secreted. Functionally, antimicrobial peptide. Has activity against the Gram-positive bacterium S.aureus ATCC2592 (MIC=15 ug/ml), the Gram-negative bacteria E.coli ATCC25922 (MIC=60 ug/ml), B.dysenteriae (MIC=60 ug/ml), H.pylori NTCT11637 (MIC=30 ug/ml), and the fungus C.albicans ATCC2002 (MIC=30 ug/ml). Has little hemolytic activity on rabbit red blood cells. The polypeptide is Pleurain-A2 (Nidirana pleuraden (Yunnan pond frog)).